The primary structure comprises 108 residues: Cell division topological specificity factor (108 aa).

It belongs to the MinE family.

Functionally, prevents the cell division inhibition by proteins MinC and MinD at internal division sites while permitting inhibition at polar sites. This ensures cell division at the proper site by restricting the formation of a division septum at the midpoint of the long axis of the cell. In Prochlorococcus marinus (strain MIT 9215), this protein is Cell division topological specificity factor.